The following is a 594-amino-acid chain: Elongation factor 4 (594 aa).

One can recognise a tr-type G domain in the interval 2–184 (KNIRNFSIIA…TIVAKVPAPE (183 aa)). GTP is bound by residues 14-19 (DHGKST) and 131-134 (NKID).

Belongs to the TRAFAC class translation factor GTPase superfamily. Classic translation factor GTPase family. LepA subfamily.

The protein localises to the cell inner membrane. It carries out the reaction GTP + H2O = GDP + phosphate + H(+). In terms of biological role, required for accurate and efficient protein synthesis under certain stress conditions. May act as a fidelity factor of the translation reaction, by catalyzing a one-codon backward translocation of tRNAs on improperly translocated ribosomes. Back-translocation proceeds from a post-translocation (POST) complex to a pre-translocation (PRE) complex, thus giving elongation factor G a second chance to translocate the tRNAs correctly. Binds to ribosomes in a GTP-dependent manner. This Francisella tularensis subsp. tularensis (strain WY96-3418) protein is Elongation factor 4.